Here is a 391-residue protein sequence, read N- to C-terminus: Phosphoglycerate kinase (391 aa).

Substrate contacts are provided by residues 21–23 (DLN), R36, 59–62 (HLGR), R113, and R146. Residues K197, E319, and 345 to 348 (GGDT) contribute to the ATP site.

This sequence belongs to the phosphoglycerate kinase family. As to quaternary structure, monomer.

The protein resides in the cytoplasm. It carries out the reaction (2R)-3-phosphoglycerate + ATP = (2R)-3-phospho-glyceroyl phosphate + ADP. The protein operates within carbohydrate degradation; glycolysis; pyruvate from D-glyceraldehyde 3-phosphate: step 2/5. This is Phosphoglycerate kinase from Shewanella sp. (strain MR-4).